The following is a 56-amino-acid chain: Aspartyl-phosphate phosphatase YisI (56 aa).

It belongs to the spo0E family.

Functionally, aspartyl-phosphate phosphatase which specifically dephosphorylates the sporulation transcription factor Spo0A-P and negatively regulates the sporulation initiation pathway in order to control the proper timing of sporulation. In Bacillus subtilis (strain 168), this protein is Aspartyl-phosphate phosphatase YisI (yisI).